Consider the following 161-residue polypeptide: Phosphopantetheine adenylyltransferase (161 aa).

Thr9 is a binding site for substrate. ATP contacts are provided by residues 9–10 (TF) and His17. Positions 41, 73, and 87 each coordinate substrate. Residues 88–90 (GMR), Glu98, and 123–129 (WSYVSST) each bind ATP.

This sequence belongs to the bacterial CoaD family. As to quaternary structure, homohexamer. It depends on Mg(2+) as a cofactor.

It is found in the cytoplasm. It catalyses the reaction (R)-4'-phosphopantetheine + ATP + H(+) = 3'-dephospho-CoA + diphosphate. It participates in cofactor biosynthesis; coenzyme A biosynthesis; CoA from (R)-pantothenate: step 4/5. Functionally, reversibly transfers an adenylyl group from ATP to 4'-phosphopantetheine, yielding dephospho-CoA (dPCoA) and pyrophosphate. This chain is Phosphopantetheine adenylyltransferase, found in Actinobacillus succinogenes (strain ATCC 55618 / DSM 22257 / CCUG 43843 / 130Z).